A 169-amino-acid chain; its full sequence is Peptide deformylase (169 aa).

Positions 91 and 133 each coordinate Fe cation. Glutamate 134 is an active-site residue. Histidine 137 lines the Fe cation pocket.

The protein belongs to the polypeptide deformylase family. Fe(2+) serves as cofactor.

It catalyses the reaction N-terminal N-formyl-L-methionyl-[peptide] + H2O = N-terminal L-methionyl-[peptide] + formate. Its function is as follows. Removes the formyl group from the N-terminal Met of newly synthesized proteins. Requires at least a dipeptide for an efficient rate of reaction. N-terminal L-methionine is a prerequisite for activity but the enzyme has broad specificity at other positions. In Klebsiella pneumoniae subsp. pneumoniae (strain ATCC 700721 / MGH 78578), this protein is Peptide deformylase.